We begin with the raw amino-acid sequence, 263 residues long: Undecaprenyl-diphosphatase (263 aa).

6 helical membrane-spanning segments follow: residues 40–60 (PGVL…LVYF), 87–107 (LLII…DFFV), 109–129 (AFHN…LLFF), 186–206 (FSFL…LLEW), 219–239 (AGAV…MGVV), and 243–263 (RLYA…AISS).

The protein belongs to the UppP family.

The protein localises to the cell inner membrane. The enzyme catalyses di-trans,octa-cis-undecaprenyl diphosphate + H2O = di-trans,octa-cis-undecaprenyl phosphate + phosphate + H(+). Its function is as follows. Catalyzes the dephosphorylation of undecaprenyl diphosphate (UPP). Confers resistance to bacitracin. This Syntrophotalea carbinolica (strain DSM 2380 / NBRC 103641 / GraBd1) (Pelobacter carbinolicus) protein is Undecaprenyl-diphosphatase.